Consider the following 691-residue polypeptide: MSDVIAEHAVDTSVEGDAKAALPVQSTKQFSVYEATSEELIERSMAPIKKEFLCPPPPSRSVKQNDAADVRAPQSGLVQEKKSKRQLKRERREQSTINLCPQVARTEDVDSCQYKDKCRFNHDIEAFKAQKADDIEGQCPFVASGMKCAYGLSCRFLGSHRDITGNSDDKEKSEMNFFNKETQRLLWKNKMTFTNADAKLKSLGLLGHAKKSNAAEEITAEKTQNGMNGTQATEVAVDSAVSSEHTSEMIQDVDIPGPLETEEVRPMKKAKSEDQKNSKTGDVGGVYDGVKLEEETKKNGYPTSKANVEDEDSIKIVETDSSLKLHPREKKKLIDFRDKLYLAPLTTVGNLPFRRLCKVLGADVTCGEMAMCTNLLQGQASEWALLRRHSSEDLFGVQICGSYPDTVSRVVELIDRECTVDFIDINMGCPIDMVVNKSAGSALLNKPLRMKNIVEVSSSIVETPITIKVRTAFFEGKNRIDSLIADIGNWGATAVTIHGRSRQQRYSKSADWDYIYQCTKNATTNLQVIGNGDVYSYLDWNKHKSDCPELSSCMIARGALIKPWIFTEIKEQRHWDITSGERLNIMKDFVRFGLQHWGSDTKGVETTRHFLLEWLSYTFRYIPVGLLDVIPQQINWRPPSYFGRDDLETLMMSESAGDWVRISEMLLGKVPEGFTFAPKHKSNAYDRAENG.

Residue serine 2 is modified to N-acetylserine. The interval 55–94 (PPPPSRSVKQNDAADVRAPQSGLVQEKKSKRQLKRERREQ) is disordered. 2 consecutive C3H1-type zinc fingers follow at residues 94–125 (QSTI…HDIE) and 138–163 (QCPF…HRDI). The interval 259-286 (LETEEVRPMKKAKSEDQKNSKTGDVGGV) is disordered. The segment covering 262–279 (EEVRPMKKAKSEDQKNSK) has biased composition (basic and acidic residues). FMN contacts are provided by residues 344-346 (PLT) and glutamine 398. Cysteine 429 functions as the Proton donor in the catalytic mechanism. Residues lysine 468, histidine 498, 531–533 (NGD), and 556–557 (AR) contribute to the FMN site.

It belongs to the Dus family. Dus3 subfamily. Requires FMN as cofactor.

The enzyme catalyses 5,6-dihydrouridine(47) in tRNA + NAD(+) = uridine(47) in tRNA + NADH + H(+). It catalyses the reaction 5,6-dihydrouridine(47) in tRNA + NADP(+) = uridine(47) in tRNA + NADPH + H(+). The catalysed reaction is a 5,6-dihydrouridine in mRNA + NAD(+) = a uridine in mRNA + NADH + H(+). It carries out the reaction a 5,6-dihydrouridine in mRNA + NADP(+) = a uridine in mRNA + NADPH + H(+). Its function is as follows. Catalyzes the synthesis of dihydrouridine, a modified base found in the D-loop of most tRNAs. Specifically modifies U47 in cytoplasmic tRNAs. Catalyzes the synthesis of dihydrouridine in some mRNAs, thereby affecting their translation. The chain is tRNA-dihydrouridine(47) synthase [NAD(P)(+)]-like from Arabidopsis thaliana (Mouse-ear cress).